The primary structure comprises 398 residues: MEPGLLRPAPVSEVIVLHYNYTGKLRGARYQPGAGLRADAVVCLAVCALIVLENLAVLVVLGRHPRFHAPMFLLLGSLTLSDLLAGAAYAANILLSGPLTLRLSPALWFAREGGVFVALAASVLSLLAIALERLLTMERRGPAPAARRGRTLALAAGAWGVSLLLGLLPALGWNCLGRLEACSTVLPLYAKAYVLFCVLAFVGILAAICGLYARIYCQVRAKAQRLRARPGAGEGTSARARGTPRSLALLRTLSVVLVAFVACWGPLFLLLLLDVACPARACPVLLQADPFLGLAMANSLLNPIIYTFTNRDLRHALLRLICCGRRPCWGGSGTSRSPGSTLGASGGLHRWLPPGMDRSSSRSERSSPQRDGLDTSGSTGSPAAPTAAQTLVPPPAAD.

Residues 1 to 40 (MEPGLLRPAPVSEVIVLHYNYTGKLRGARYQPGAGLRADA) are Extracellular-facing. A glycan (N-linked (GlcNAc...) asparagine) is linked at Asn20. The chain crosses the membrane as a helical span at residues 41–61 (VVCLAVCALIVLENLAVLVVL). Residues 62-70 (GRHPRFHAP) lie on the Cytoplasmic side of the membrane. Residues 71–91 (MFLLLGSLTLSDLLAGAAYAA) traverse the membrane as a helical segment. Topologically, residues 92-111 (NILLSGPLTLRLSPALWFAR) are extracellular. A helical membrane pass occupies residues 112 to 132 (EGGVFVALAASVLSLLAIALE). At 133 to 151 (RLLTMERRGPAPAARRGRT) the chain is on the cytoplasmic side. A helical membrane pass occupies residues 152–172 (LALAAGAWGVSLLLGLLPALG). Over 173 to 191 (WNCLGRLEACSTVLPLYAK) the chain is Extracellular. The chain crosses the membrane as a helical span at residues 192-212 (AYVLFCVLAFVGILAAICGLY). Over 213–252 (ARIYCQVRAKAQRLRARPGAGEGTSARARGTPRSLALLRT) the chain is Cytoplasmic. A helical transmembrane segment spans residues 253-273 (LSVVLVAFVACWGPLFLLLLL). The Extracellular segment spans residues 274–287 (DVACPARACPVLLQ). Residues 288 to 308 (ADPFLGLAMANSLLNPIIYTF) traverse the membrane as a helical segment. Residues 309–398 (TNRDLRHALL…QTLVPPPAAD (90 aa)) lie on the Cytoplasmic side of the membrane. Cys323 carries the S-palmitoyl cysteine lipid modification. The disordered stretch occupies residues 332-398 (SGTSRSPGST…QTLVPPPAAD (67 aa)). Positions 334-343 (TSRSPGSTLG) are enriched in low complexity. At Ser337 the chain carries Phosphoserine. The segment covering 359–373 (SSSRSERSSPQRDGL) has biased composition (basic and acidic residues). Phosphoserine is present on Ser381.

This sequence belongs to the G-protein coupled receptor 1 family.

The protein localises to the cell membrane. In terms of biological role, receptor for the lysosphingolipid sphingosine 1-phosphate (S1P). S1P is a bioactive lysophospholipid that elicits diverse physiological effect on most types of cells and tissues. Is coupled to both the G(i/O)alpha and G(12) subclass of heteromeric G-proteins. In Sus scrofa (Pig), this protein is Sphingosine 1-phosphate receptor 5 (S1PR5).